We begin with the raw amino-acid sequence, 759 residues long: Forkhead box protein M1 (759 aa).

Disordered stretches follow at residues Met-1–Ser-54 and Lys-94–Glu-165. Polar residues predominate over residues Pro-36–Ser-54. The segment covering Leu-141–Pro-151 has biased composition (low complexity). Glycyl lysine isopeptide (Lys-Gly) (interchain with G-Cter in SUMO2) cross-links involve residues Lys-200 and Lys-324. Positions Glu-234–Leu-326 form a DNA-binding region, fork-head. The tract at residues Pro-328–Arg-349 is disordered. Ser-330 carries the phosphoserine modification. The span at Glu-335–Arg-349 shows a compositional bias: basic and acidic residues. A Glycyl lysine isopeptide (Lys-Gly) (interchain with G-Cter in SUMO2) cross-link involves residue Lys-355. The residue at position 375 (Ser-375) is a Phosphoserine; by CHEK2. Residues Lys-421 and Lys-439 each participate in a glycyl lysine isopeptide (Lys-Gly) (interchain with G-Cter in SUMO2) cross-link. Ser-521 carries the phosphoserine modification. Disordered stretches follow at residues Leu-530 to Glu-556, Met-572 to Ala-643, and Leu-681 to Pro-706. Residues Val-531 to Arg-542 show a composition bias toward basic and acidic residues. Polar residues predominate over residues Pro-604 to Val-613. Thr-608 carries the post-translational modification Phosphothreonine; by CDK1. At Thr-624 the chain carries Phosphothreonine. A phosphoserine; by PLK1 mark is found at Ser-726 and Ser-735.

Phosphorylated in M (mitotic) phase. Phosphorylation by the checkpoint kinase CHEK2 in response to DNA damage increases the FOXM1 protein stability probably stimulating the transcription of genes involved in DNA repair. Phosphorylated by CDK1 in late S and G2 phases, creating docking sites for the POLO box domains of PLK1. Subsequently, PLK1 binds and phosphorylates FOXM1, leading to activation of transcriptional activity and subsequent enhanced expression of key mitotic regulators. Phosphorylated by GSK3B leading to ubiquitination and proteasomal degradation. In terms of tissue distribution, highly expressed in thymus and testis, but weakly in intestine and lung. Appears to be expressed only in adult organs containing proliferating/cycling cells or in response to growth factors.

Its subcellular location is the nucleus. Functionally, transcription factor regulating the expression of cell cycle genes essential for DNA replication and mitosis. Plays a role in the control of cell proliferation. Also plays a role in DNA break repair, participating in the DNA damage checkpoint response. Promotes transcription of PHB2. This Rattus norvegicus (Rat) protein is Forkhead box protein M1 (Foxm1).